A 681-amino-acid polypeptide reads, in one-letter code: Cadmium, zinc and cobalt-transporting ATPase (681 aa).

An HMA domain is found at M1–Q66. The Cytoplasmic portion of the chain corresponds to M1–K72. The Cd(2+) site is built by C11 and C14. Co(2+) contacts are provided by C11 and C14. Positions 11 and 14 each coordinate Zn(2+). The chain crosses the membrane as a helical span at residues P73–I92. Residues H93–H102 are Extracellular-facing. The helical transmembrane segment at L103–L124 threads the bilayer. Residues R125–Q131 lie on the Cytoplasmic side of the membrane. Residues F132–A151 form a helical membrane-spanning segment. Topologically, residues H152–E154 are extracellular. Residues A155–A174 traverse the membrane as a helical segment. Topologically, residues R175 to P308 are cytoplasmic. A helical transmembrane segment spans residues A309–G327. Topologically, residues D328–W332 are extracellular. A helical membrane pass occupies residues I333–I350. Topologically, residues S351–R630 are cytoplasmic. The 4-aspartylphosphate intermediate role is filled by D388. 2 residues coordinate Mg(2+): D578 and D582. Residues I631–S652 form a helical membrane-spanning segment. At G653–A660 the chain is on the extracellular side. Residues V661–M676 traverse the membrane as a helical segment. Over R677 to I681 the chain is Cytoplasmic.

Belongs to the cation transport ATPase (P-type) (TC 3.A.3) family. Type IB subfamily.

The protein resides in the cell membrane. It catalyses the reaction Zn(2+)(in) + ATP + H2O = Zn(2+)(out) + ADP + phosphate + H(+). The catalysed reaction is Cd(2+)(in) + ATP + H2O = Cd(2+)(out) + ADP + phosphate + H(+). Couples the hydrolysis of ATP with the transport of cadmium, zinc and cobalt out of the cell. This Helicobacter felis protein is Cadmium, zinc and cobalt-transporting ATPase (cadA).